The following is a 324-amino-acid chain: HPr kinase/phosphorylase (324 aa).

Catalysis depends on residues H146 and K167. 161–168 (GDSGLGKS) provides a ligand contact to ATP. Mg(2+) is bound at residue S168. D185 acts as the Proton acceptor; for phosphorylation activity. Proton donor; for dephosphorylation activity in catalysis. Residues 209–218 (LEVRGLGLLD) are important for the catalytic mechanism of both phosphorylation and dephosphorylation. E210 contributes to the Mg(2+) binding site. The active site involves R250. An important for the catalytic mechanism of dephosphorylation region spans residues 271 to 276 (QVAAGR).

This sequence belongs to the HPrK/P family. Homohexamer. Requires Mg(2+) as cofactor.

It carries out the reaction [HPr protein]-L-serine + ATP = [HPr protein]-O-phospho-L-serine + ADP + H(+). It catalyses the reaction [HPr protein]-O-phospho-L-serine + phosphate + H(+) = [HPr protein]-L-serine + diphosphate. In terms of biological role, catalyzes the ATP- as well as the pyrophosphate-dependent phosphorylation of a specific serine residue in HPr, a phosphocarrier protein of the phosphoenolpyruvate-dependent sugar phosphotransferase system (PTS). HprK/P also catalyzes the pyrophosphate-producing, inorganic phosphate-dependent dephosphorylation (phosphorolysis) of seryl-phosphorylated HPr (P-Ser-HPr). The chain is HPr kinase/phosphorylase from Ralstonia nicotianae (strain ATCC BAA-1114 / GMI1000) (Ralstonia solanacearum).